We begin with the raw amino-acid sequence, 357 residues long: Protein RecA (357 aa).

ATP is bound at residue 67-74; the sequence is GPESSGKT. Residues 332-357 form a disordered region; sequence PSAMSSSSSDDENSEGNVDFETGEVF.

This sequence belongs to the RecA family.

It is found in the cytoplasm. Its function is as follows. Can catalyze the hydrolysis of ATP in the presence of single-stranded DNA, the ATP-dependent uptake of single-stranded DNA by duplex DNA, and the ATP-dependent hybridization of homologous single-stranded DNAs. It interacts with LexA causing its activation and leading to its autocatalytic cleavage. This is Protein RecA from Shewanella sp. (strain ANA-3).